The sequence spans 123 residues: MKSLILIAMLLMLDCANSLNCRGPYTSYNNKCIWVNRLDKMHHKKTYSEASTTCLITFPMGTLARRSLIDNEKDMKFISKFGMGQSLWIRDDKKPEVGKCAYTDGKTFGFSPCNATYGFVCID.

The region spanning 21–122 (CRGPYTSYNN…CNATYGFVCI (102 aa)) is the C-type lectin domain.

This chain is Putative C-type lectin protein FPV003/FPV258, found in Fowlpox virus (strain NVSL) (FPV).